A 363-amino-acid chain; its full sequence is Putative lipoate-protein ligase A (363 aa).

In terms of domain architecture, BPL/LPL catalytic spans 49–229 (STAKHCLLLY…CFLLHKSHST (181 aa)). Residues Arg91, 96 to 99 (GTVF), and Lys152 each bind ATP. Lys152 serves as a coordination point for (R)-lipoate.

It belongs to the LplA family. In terms of assembly, monomer.

The protein localises to the cytoplasm. The catalysed reaction is L-lysyl-[lipoyl-carrier protein] + (R)-lipoate + ATP = N(6)-[(R)-lipoyl]-L-lysyl-[lipoyl-carrier protein] + AMP + diphosphate + H(+). It functions in the pathway protein modification; protein lipoylation via exogenous pathway; protein N(6)-(lipoyl)lysine from lipoate: step 1/2. The protein operates within protein modification; protein lipoylation via exogenous pathway; protein N(6)-(lipoyl)lysine from lipoate: step 2/2. Functionally, catalyzes both the ATP-dependent activation of exogenously supplied lipoate to lipoyl-AMP and the transfer of the activated lipoyl onto the lipoyl domains of lipoate-dependent enzymes. The chain is Putative lipoate-protein ligase A (aim22) from Schizosaccharomyces pombe (strain 972 / ATCC 24843) (Fission yeast).